The following is a 438-amino-acid chain: Adenylosuccinate synthetase (438 aa).

GTP-binding positions include 13–19 and 41–43; these read GDEGKGK and GHT. The Proton acceptor role is filled by Asp-14. Mg(2+)-binding residues include Asp-14 and Gly-41. IMP contacts are provided by residues 14 to 17, 39 to 42, Thr-130, Arg-144, Gln-225, Thr-240, and Arg-312; these read DEGK and NAGH. His-42 acts as the Proton donor in catalysis. A substrate-binding site is contributed by 308-314; the sequence is ATTGRQR. GTP is bound by residues Arg-314, 340–342, and 422–424; these read KLD and STG.

The protein belongs to the adenylosuccinate synthetase family. Homodimer. Requires Mg(2+) as cofactor.

It is found in the cytoplasm. The enzyme catalyses IMP + L-aspartate + GTP = N(6)-(1,2-dicarboxyethyl)-AMP + GDP + phosphate + 2 H(+). It participates in purine metabolism; AMP biosynthesis via de novo pathway; AMP from IMP: step 1/2. Plays an important role in the de novo pathway of purine nucleotide biosynthesis. Catalyzes the first committed step in the biosynthesis of AMP from IMP. This is Adenylosuccinate synthetase from Vesicomyosocius okutanii subsp. Calyptogena okutanii (strain HA).